The following is a 117-amino-acid chain: Prefoldin subunit beta (117 aa).

The protein belongs to the prefoldin subunit beta family. Heterohexamer of two alpha and four beta subunits.

It localises to the cytoplasm. Its function is as follows. Molecular chaperone capable of stabilizing a range of proteins. Seems to fulfill an ATP-independent, HSP70-like function in archaeal de novo protein folding. The protein is Prefoldin subunit beta (pfdB) of Methanosarcina acetivorans (strain ATCC 35395 / DSM 2834 / JCM 12185 / C2A).